Consider the following 665-residue polypeptide: MTEIERIDQLREELHRHNYNYYVLNAPEITDQEFDKLMRELQDLEEKHPEHRDENSPSMRVGSDINKNFTQVVHKYPMLSLANTYSETEVTEFYDRVKKSLNEDFEICCEMKYDGTSISLTYENGKLVRAVTRGDGVQGDDVTGNVKTIRSIPLVLHGKGYPETFEIRGEILMPWVVFEELNKEREAREEPLFANPRNAASGTLKLQNSAIVASRKLDAYLYYLLGDNLPCDGHYENLKEAEKWGFKISDLTRKCKTLQEVFDFIKYWDVERKNLPVATDGIVLKVNSLRQQRNLGFTAKSPRWAIAYKFQAEQALTRLNKVTYQVGRTGAVTPVANLDPIQLSGTVVKRASLHNADIIEGLDLHIGDMVYVEKGGEIIPKIVGVDKDARIMIGDKVKFITHCPECGSKLVRYEGEAAYYCTNDAACPPQIKGKIEHFISRRAMNIDGLGPETVDQFYQEGLIRDVADLYTLKTSDIINLERMGEKSAENIIKGIEQSKEVPFERVLFALGIRFVGETVAKKVAKSFKSMDALADASLDNLIHVDEIGEKIAQSILLYFANPKNRDIIERLRVAGVRLEADEEDTSEHTDKLAGKSIVISGVFAHHSRDEYKELIEKHGGKNVGSISSKTSFILAGDNMGPSKLEKAQKLGVTIVSEEEFLQMIE.

NAD(+)-binding positions include 31-35 (DQEFD), 80-81 (SL), and Glu110. Catalysis depends on Lys112, which acts as the N6-AMP-lysine intermediate. The NAD(+) site is built by Arg133, Glu170, Lys285, and Lys309. Residues Cys403, Cys406, Cys421, and Cys427 each coordinate Zn(2+). In terms of domain architecture, BRCT spans 587–665 (EHTDKLAGKS…SEEEFLQMIE (79 aa)).

It belongs to the NAD-dependent DNA ligase family. LigA subfamily. Mg(2+) serves as cofactor. Requires Mn(2+) as cofactor.

It carries out the reaction NAD(+) + (deoxyribonucleotide)n-3'-hydroxyl + 5'-phospho-(deoxyribonucleotide)m = (deoxyribonucleotide)n+m + AMP + beta-nicotinamide D-nucleotide.. Its function is as follows. DNA ligase that catalyzes the formation of phosphodiester linkages between 5'-phosphoryl and 3'-hydroxyl groups in double-stranded DNA using NAD as a coenzyme and as the energy source for the reaction. It is essential for DNA replication and repair of damaged DNA. In Phocaeicola vulgatus (strain ATCC 8482 / DSM 1447 / JCM 5826 / CCUG 4940 / NBRC 14291 / NCTC 11154) (Bacteroides vulgatus), this protein is DNA ligase.